The sequence spans 238 residues: Orotidine 5'-phosphate decarboxylase (238 aa).

Residues Asp10, Lys32, 59 to 68 (DLKLHDIPNT), Thr122, Arg184, Gln193, Gly213, and Arg214 each bind substrate. The active-site Proton donor is the Lys61.

The protein belongs to the OMP decarboxylase family. Type 1 subfamily. Homodimer.

The catalysed reaction is orotidine 5'-phosphate + H(+) = UMP + CO2. Its pathway is pyrimidine metabolism; UMP biosynthesis via de novo pathway; UMP from orotate: step 2/2. In terms of biological role, catalyzes the decarboxylation of orotidine 5'-monophosphate (OMP) to uridine 5'-monophosphate (UMP). This is Orotidine 5'-phosphate decarboxylase from Bacillus cereus (strain AH187).